Consider the following 183-residue polypeptide: Tail fiber assembly protein (183 aa).

This sequence belongs to the tfa family.

Chaperone involved, together with gp57, in the assembly of the distal-half tail fiber of T4. It is necessary for the maturation of protein gp37 to the dimeric structural subunit P37. This is Tail fiber assembly protein (38) from Escherichia coli (Bacteriophage T4).